The chain runs to 525 residues: Chromaffin granule amine transporter (525 aa).

Residues 1–21 are Cytoplasmic-facing; sequence MLRTILDAPQRLLKEGRASRQ. The chain crosses the membrane as a helical span at residues 22-42; the sequence is LVLVVVFVALLLDNMLFTVVV. Topologically, residues 43-138 are lumenal, vesicle; it reads PIVPTFLYDM…TGFLEEEITR (96 aa). Asn58, Asn87, and Asn104 each carry an N-linked (GlcNAc...) asparagine glycan. Residues 139-158 traverse the membrane as a helical segment; the sequence is VGVLFASKAVMQLLVNPFVG. Residues 159–167 are Cytoplasmic-facing; it reads PLTNRIGYH. A helical membrane pass occupies residues 168-188; the sequence is IPMFAGFVIMFLSTVMFAFSG. The Lumenal, vesicle portion of the chain corresponds to 189–197; the sequence is TYTLLFVAR. The chain crosses the membrane as a helical span at residues 198 to 218; sequence TLQGIGSSFSSVAGLGMLASV. Residues 219 to 227 lie on the Cytoplasmic side of the membrane; it reads YTDDHERGR. The chain crosses the membrane as a helical span at residues 228-250; sequence AMGTALGGLALGLLVGAPFGSVM. Over 251–256 the chain is Lumenal, vesicle; the sequence is YEFVGK. A helical membrane pass occupies residues 257-279; it reads SAPFLILAFLALLDGALQLCILQ. At 280 to 299 the chain is on the cytoplasmic side; the sequence is PSKVSPESAKGTPLFMLLKD. Residues 300–319 form a helical membrane-spanning segment; it reads PYILVAAGSICFANMGVAIL. The Lumenal, vesicle segment spans residues 320–335; sequence EPTLPIWMMQTMCSPK. Residues 336 to 360 form a helical membrane-spanning segment; the sequence is WQLGLAFLPASVSYLIGTNLFGVLA. The Cytoplasmic segment spans residues 361-365; that stretch reads NKMGR. The chain crosses the membrane as a helical span at residues 366–386; sequence WLCSLIGMLVVGTSLLCVPLA. The Lumenal, vesicle portion of the chain corresponds to 387–397; the sequence is HNIFGLIGPNA. The chain crosses the membrane as a helical span at residues 398-418; that stretch reads GLGLAIGMVDSSMMPIMGHLV. At 419 to 422 the chain is on the cytoplasmic side; sequence DLRH. A helical membrane pass occupies residues 423-443; that stretch reads TSVYGSVYAIADVAFCMGFAI. Topologically, residues 444–448 are lumenal, vesicle; it reads GPSTG. A helical transmembrane segment spans residues 449–470; sequence GAIVKAIGFPWLMVITGVINIV. Residues 471–525 are Cytoplasmic-facing; the sequence is YAPLCYYLRSPPAKEEKLAILSQDCPMETRMYATQKPTKEFPLGEDSDEEPDHEE. The tract at residues 503–525 is disordered; the sequence is ATQKPTKEFPLGEDSDEEPDHEE. The span at 513–525 shows a compositional bias: acidic residues; that stretch reads LGEDSDEEPDHEE.

It belongs to the major facilitator superfamily. Vesicular transporter family. Expressed primarily in neuroendocrine tissues. Highly expressed in chromaffin cells of the adrenal medulla (at protein level). Detected in peripheral sympathetic ganglia (at protein level). Found in some paracrine cells in stomach and duodenum (at protein level). Expressed in substantia nigra. In terms of tissue distribution, expressed in gastrointestinal tract.

It is found in the cytoplasmic vesicle. It localises to the secretory vesicle membrane. Its subcellular location is the secretory vesicle. The protein resides in the synaptic vesicle membrane. The protein localises to the endoplasmic reticulum membrane. The enzyme catalyses serotonin(in) + 2 H(+)(out) = serotonin(out) + 2 H(+)(in). It catalyses the reaction (R)-noradrenaline(in) + 2 H(+)(out) = (R)-noradrenaline(out) + 2 H(+)(in). The catalysed reaction is dopamine(in) + 2 H(+)(out) = dopamine(out) + 2 H(+)(in). Strongly inhibited by reserpine. Also inhibited to a lesser extent by ketanserin and fenfluramine. Not significantly inhibited by tetrabenazine. In terms of biological role, electrogenic antiporter that exchanges one cationic monoamine with two intravesicular protons across the membrane of secretory and synaptic vesicles. Uses the electrochemical proton gradient established by the V-type proton-pump ATPase to accumulate high concentrations of monoamines inside the vesicles prior to their release via exocytosis. Transports catecholamines and indolamines with higher affinity for serotonin. Regulates the transvesicular monoaminergic gradient that determines the quantal size. Mediates presynaptic monoaminergic vesicle transport in the amygdala and prefrontal brain regions related with emotion processing in response to environmental stimuli. Unable to uptake serotonin. The sequence is that of Chromaffin granule amine transporter (SLC18A1) from Homo sapiens (Human).